The primary structure comprises 86 residues: Putative antitoxin VapB36 (86 aa).

Its function is as follows. Possibly the antitoxin component of a type II toxin-antitoxin (TA) system. Its cognate toxin is VapC36 (Potential). The chain is Putative antitoxin VapB36 (vapB36) from Mycobacterium tuberculosis (strain CDC 1551 / Oshkosh).